A 448-amino-acid polypeptide reads, in one-letter code: CCA-adding enzyme (448 aa).

Positions 52 and 55 each coordinate ATP. Residues S52 and K55 each coordinate CTP. Positions 64, 66, and 118 each coordinate Mg(2+). ATP is bound by residues H141, K160, and Y169. CTP contacts are provided by H141, K160, and Y169.

The protein belongs to the tRNA nucleotidyltransferase/poly(A) polymerase family. Archaeal CCA-adding enzyme subfamily. In terms of assembly, homodimer. The cofactor is Mg(2+).

It carries out the reaction a tRNA precursor + 2 CTP + ATP = a tRNA with a 3' CCA end + 3 diphosphate. The catalysed reaction is a tRNA with a 3' CCA end + 2 CTP + ATP = a tRNA with a 3' CCACCA end + 3 diphosphate. Functionally, catalyzes the addition and repair of the essential 3'-terminal CCA sequence in tRNAs without using a nucleic acid template. Adds these three nucleotides in the order of C, C, and A to the tRNA nucleotide-73, using CTP and ATP as substrates and producing inorganic pyrophosphate. tRNA 3'-terminal CCA addition is required both for tRNA processing and repair. Also involved in tRNA surveillance by mediating tandem CCA addition to generate a CCACCA at the 3' terminus of unstable tRNAs. While stable tRNAs receive only 3'-terminal CCA, unstable tRNAs are marked with CCACCA and rapidly degraded. This chain is CCA-adding enzyme, found in Pyrococcus abyssi (strain GE5 / Orsay).